Reading from the N-terminus, the 394-residue chain is Cell division protein FtsZ (394 aa).

GTP-binding positions include 21 to 25 (GGGNN), Arg29, 108 to 110 (GTG), Glu139, Arg143, Asn166, and Asp187. Residues 317 to 394 (DKPSSQGRKA…EERRSRRTRR (78 aa)) are disordered. Low complexity-rich tracts occupy residues 328–346 (STGF…SGAS) and 353–364 (SAHTSHSQSSES). Residues 365 to 388 (VSERSHTTKDDDIPSFIRNREERR) are compositionally biased toward basic and acidic residues.

Belongs to the FtsZ family. As to quaternary structure, homodimer. Polymerizes to form a dynamic ring structure in a strictly GTP-dependent manner. Interacts directly with several other division proteins.

Its subcellular location is the cytoplasm. Essential cell division protein that forms a contractile ring structure (Z ring) at the future cell division site. The regulation of the ring assembly controls the timing and the location of cell division. One of the functions of the FtsZ ring is to recruit other cell division proteins to the septum to produce a new cell wall between the dividing cells. Binds GTP and shows GTPase activity. This Staphylococcus epidermidis (strain ATCC 35984 / DSM 28319 / BCRC 17069 / CCUG 31568 / BM 3577 / RP62A) protein is Cell division protein FtsZ.